A 661-amino-acid chain; its full sequence is COBRA-like protein 7 (661 aa).

The signal sequence occupies residues 1 to 26; the sequence is MDSAPNFIPRLLLLSLLIVSIPLTSS. Positions 26–45 are disordered; that stretch reads SQSDANTTNPSPSPPSDSDL. N-linked (GlcNAc...) asparagine glycosylation is found at asparagine 31, asparagine 64, asparagine 122, asparagine 170, asparagine 314, asparagine 327, asparagine 356, asparagine 369, asparagine 398, asparagine 410, asparagine 430, asparagine 472, asparagine 551, and asparagine 561. Serine 637 is lipidated: GPI-anchor amidated serine. Residues 638–661 constitute a propeptide, removed in mature form; that stretch reads SQHRKHISVFLLALPVLALLILRA.

This sequence belongs to the COBRA family. As to expression, expressed in roots, stems, leaves, flowers and siliques.

It is found in the cell membrane. The sequence is that of COBRA-like protein 7 (COBL7) from Arabidopsis thaliana (Mouse-ear cress).